A 702-amino-acid chain; its full sequence is SAGA complex subunit NGG1 (702 aa).

Basic residues predominate over residues 1–10 (MPRHGRRGKL). Disordered regions lie at residues 1–29 (MPRH…PSKL) and 90–224 (LRKI…VKNP). Basic and acidic residues-rich tracts occupy residues 11–22 (PKGEKLPKKEGG) and 90–108 (LRKI…EKQE). Residues 109–125 (TSNADGQHESSTATEET) are compositionally biased toward polar residues. Ser-134 bears the Phosphoserine mark. A compositionally biased stretch (basic and acidic residues) spans 162-219 (MAKEEINEDKDLQVHRDQPREKRPFDSETENRATENENTQRPDNKKQKIDVDKMENDP). At Ser-407 the chain carries Phosphoserine. A Phosphothreonine modification is found at Thr-464. The Nuclear localization signal signature appears at 606 to 618 (KRIRVPKKRKKHH). Disordered regions lie at residues 611-636 (PKKR…IAQQ) and 672-702 (NESV…VELN). Residues 620-636 (AASNNVNTGTTSQIAQQ) show a composition bias toward polar residues. Residues 680 to 689 (DQEEDEDEAD) are compositionally biased toward acidic residues.

Belongs to the NGG1 family. Component of the 1.8 MDa SAGA (Spt-Ada-Gcn5 acetyltransferase) complex, which is composed of 19 subunits TRA1, SPT7, TAF5, NGG1/ADA3, SGF73, SPT20/ADA5, SPT8, TAF12, TAF6, HFI1/ADA1, UBP8, GCN5, ADA2, SPT3, SGF29, TAF10, TAF9, SGF11 and SUS1. The SAGA complex is composed of 4 modules, namely the HAT (histone acetyltransferase) module (GCN5, ADA2, NGG1/ADA3 and SGF29), the DUB (deubiquitinating) module (UBP8, SGF11, SGF73 and SUS1), the core or TAF (TBP-associated factor) module (TAF5, TAF6, TAF9, TAF10 and TAF12), and the Tra1 or SPT (Suppressor of Ty) module (TRA1, HFI1/ADA1, SPT3, SPT7, SPT8 and SPT20/ADA5). The Tra1/SPT module binds activators, the core module recruits TBP (TATA-binding protein), the HAT module contains the histone H3 acetyltransferase GCN5, and the DUB module comprises the histone H2B deubiquitinase UBP8. Also identified in an altered form of SAGA, named SALSA (SAGA altered, Spt8 absent) or SLIK (SAGA-like) complex, which contains a C-terminal truncated form of SPT7 and is missing SPT8. However, it has been shown that the SAGA and SAGA-like SALSA/SLIK transcriptional coactivators are structurally and biochemically equivalent. Component of the 0.8 MDa ADA complex, a HAT complex distinct from SAGA, which at least consists of ADA2, NGG1/ADA3, AHC1, AHC2, SGF29 and GCN5. Identified in an Ada.spt complex with SPT7 and TRA1. Component of an ADA/GCN5 complex that consists of HFI1/ADA1, ADA2, NGG1/ADA3, SPT20/ADA5 and GCN5 and probably is a subcomplex of SAGA.

The protein localises to the nucleus. In terms of biological role, component of the transcription coactivator SAGA complex. SAGA acts as a general cofactor required for essentially all RNA polymerase II transcription. At the promoters, SAGA is required for transcription pre-initiation complex (PIC) recruitment. It influences RNA polymerase II transcriptional activity through different activities such as TBP interaction (via core/TAF module) and promoter selectivity, interaction with transcription activators (via Tra1/SPT module), and chromatin modification through histone acetylation (via HAT module) and deubiquitination (via DUB module). SAGA preferentially acetylates histones H3 (to form H3K9ac, H3K14ac, H3K18ac and H3K23ac) and H2B and deubiquitinates histone H2B. SAGA interacts with DNA via upstream activating sequences (UASs). Also identified in a modified version of SAGA named SALSA or SLIK. The cleavage of SPT7 and the absence of the SPT8 subunit in SLIK neither drive any major conformational differences in its structure compared with SAGA, nor significantly affect HAT, DUB, or DNA-binding activities. Component of the ADA histone acetyltransferase complex, which preferentially acetylates nucleosomal histones H3 (to form H3K14ac and H3K18ac) and H2B. May be involved in response to DNA damage by genotoxic agents. The sequence is that of SAGA complex subunit NGG1 (NGG1) from Saccharomyces cerevisiae (strain ATCC 204508 / S288c) (Baker's yeast).